A 1280-amino-acid chain; its full sequence is Pullulanase A (1280 aa).

The N-terminal stretch at 1 to 44 (MRKTPSHTEKKMVYSIRSLKNGTGSVLIGASLVLLAMATPTISS) is a signal peptide. The interval 42–132 (ISSDESTPTT…VTTETKAEEP (91 aa)) is disordered. The span at 48–61 (TPTTNEPNNRNTTT) shows a compositional bias: low complexity. The segment covering 79–90 (DISSPGNANASL) has biased composition (polar residues). Residues 115–126 (EPTTSTSPVTTE) are compositionally biased toward low complexity. Substrate is bound by residues 156–158 (WTW), tryptophan 168, aspartate 214, 263–265 (WYW), tryptophan 276, lysine 318, and asparagine 323. Ca(2+) contacts are provided by serine 661 and tyrosine 663. Substrate contacts are provided by residues 667–668 (YD) and phenylalanine 743. Catalysis depends on aspartate 778, which acts as the Nucleophile. Glutamate 807 acts as the Proton donor in catalysis. Substrate is bound at residue tryptophan 809. Ca(2+) is bound by residues methionine 828, threonine 831, and aspartate 832. Positions 839, 842, and 849 each coordinate substrate. Residues aspartate 882 and aspartate 886 each contribute to the Ca(2+) site. Residues asparagine 896, lysine 969, and 989-991 (DSY) contribute to the substrate site. Aspartate 992 serves as a coordination point for Ca(2+). Positions 1140-1248 (VSQNGTSHES…TPDKQAELPN (109 aa)) are disordered. Over residues 1149–1196 (STAEEKPDSTPSKPEHQNEASHPAHQDPAPEARPDSTKPDAKVADAEN) the composition is skewed to basic and acidic residues. Residues 1205-1218 (SQAEQPAQEAQASS) show a composition bias toward low complexity. The short motif at 1246-1250 (LPNTG) is the LPXTG sorting signal element. Threonine 1249 is modified (pentaglycyl murein peptidoglycan amidated threonine). Positions 1250 to 1280 (GIKNENKLLFAGISLLALLGLGFLLKNKKEN) are cleaved as a propeptide — removed by sortase.

Belongs to the glycosyl hydrolase 13 family.

The protein resides in the secreted. Its subcellular location is the cell wall. The protein localises to the cell surface. It catalyses the reaction Hydrolysis of (1-&gt;6)-alpha-D-glucosidic linkages in pullulan, amylopectin and glycogen, and in the alpha- and beta-limit dextrins of amylopectin and glycogen.. Inhibited by 4-O-alpha-D-glucopyranosylmoranoline (G1M). In terms of biological role, virulence factor. Involved in the degradation of glycogen of the mammalian host cells. Hydrolyzes the alpha-1,6-branchpoints of glycogen. Hydrolyzes pullulan. Does not hydrolyze dextran. Binds to mouse lung alveolar type II cells that are rich in glycogen stores. Is an alpha-glucan-specific carbohydrate-binding protein, which binds to amylose (pure alpha-(1,4)-linked glucose), amylopectin (alpha-(1,4)-linked glucose with alpha-(1,6) branch points), pullulan (linear polymer of mixed alpha-(1,4)- and alpha-(1,6)-linked glucose) and glycogen (similar to amylopectin with more frequent alpha-(1,6) branch points) in vitro. Does not bind to dextran (a linear polymer of alpha-(1,6)-linked glucose). This Streptococcus pneumoniae serotype 4 (strain ATCC BAA-334 / TIGR4) protein is Pullulanase A.